The chain runs to 5900 residues: Midasin (5900 aa).

Residues 250–270 form a disordered region; sequence GSSVKSKKGGEQQQEGEGEDE. AAA-ATPase protomer regions lie at residues 278–583, 673–1012, 1101–1346, 1411–1721, 1840–2089, and 2167–2451; these read TNTV…LRKQ, EKIS…ALNY, PIIP…IAGY, IVWT…MDKQ, RGMQ…HVLT, and LENI…EIYM. Residues 302-309 and 689-696 contribute to the ATP site; these read GVTGSGKT and GETGTGKT. Residues 796–826 form a disordered region; that stretch reads QTTTNNTKENNNNNNNNNNNNNNNNNNKKRT. The span at 797 to 821 shows a compositional bias: low complexity; sequence TTTNNTKENNNNNNNNNNNNNNNNN. ATP is bound by residues 1135–1142, 1438–1445, 1852–1859, and 2184–2191; these read GPTSSGKT, GETGCSKT, GSPGVGKT, and GPTSTSKT. A linker region spans residues 2562–4965; sequence ESAIKSILCE…EGKGKKDVSD (2404 aa). Residues 4932–5598 are disordered; sequence GDDGEGGEGG…SVEEKKLTRE (667 aa). A compositionally biased stretch (acidic residues) spans 4984-5008; sequence KDEDEDEEKEEKDEDEGFDMQDDFE. Residues 5009–5055 are compositionally biased toward basic and acidic residues; the sequence is GEMHDIKKDENKDEDKKDDPNNEKENDKEMGDLEKPEDNVVDEKLWD. The segment covering 5056–5076 has biased composition (acidic residues); it reads EQDVQDEEEQDEEGKGDETNS. Basic and acidic residues predominate over residues 5079 to 5113; sequence MMAKQDGKDDNDDDKKDDDKKDDKKKKKEENGKPD. Composition is skewed to acidic residues over residues 5114–5130 and 5139–5156; these read ENEEGEEGKDDEEEDGK and GASDEDDFGQEENEDDVI. Positions 5159–5173 are enriched in basic and acidic residues; sequence EQEKEENHGDPRGDD. Residues 5174-5199 show a composition bias toward acidic residues; it reads QMEIPEDLELEDPDEGKEDDEQQDGG. Over residues 5213–5224 the composition is skewed to basic and acidic residues; sequence DVSKEEEKKKEL. 2 stretches are compositionally biased toward acidic residues: residues 5225–5255 and 5273–5286; these read DGDEKEESDQDGDEEKEDEEKEDGDEDEDKE and EGDEPEKEQPEEDQ. Residues 5297-5313 are compositionally biased toward basic and acidic residues; sequence ETPKDSEQPLGVKDKTG. The segment covering 5339–5349 has biased composition (polar residues); that stretch reads GMTQPTPSEND. The span at 5410–5442 shows a compositional bias: basic and acidic residues; the sequence is SEPKEKAPKQDPNAKENENQDYEFIKDDEKLDK. A compositionally biased stretch (low complexity) spans 5448–5460; sequence QALAAATDTQLQD. Over residues 5469-5487 the composition is skewed to acidic residues; sequence DQAEQEEDQMDIDEEDDMD. Composition is skewed to basic and acidic residues over residues 5488-5536 and 5551-5570; these read VDHK…KDQQ and QFTKEQLENLTNLDKEKAVL. Acidic residues predominate over residues 5571-5590; the sequence is DDGDDQEMEQDGDQDDEESV. The VWFA domain occupies 5696–5889; it reads QVLLAIDDTE…NIPSILSDTL (194 aa).

It belongs to the midasin family. As to quaternary structure, associates with pre-60S ribosomes in the nucleoplasm.

The protein resides in the nucleus. It is found in the nucleolus. Its subcellular location is the nucleoplasm. Its function is as follows. Nuclear chaperone required for maturation and nuclear export of pre-60S ribosome subunits. Functions at successive maturation steps to remove ribosomal factors at critical transition points, first driving the exit of early pre-60S particles from the nucleolus and then driving late pre-60S particles from the nucleus. The sequence is that of Midasin (mdn1) from Dictyostelium discoideum (Social amoeba).